Consider the following 291-residue polypeptide: Inactive dihydropteroate synthase 2 (291 aa).

The Pterin-binding domain occupies Gln-15–Glu-272.

This sequence belongs to the DHPS family. Homodimer.

Its function is as follows. Has very low affinity for the DHPS substrate 6-hydroxymethyl-7,8-dihydropterin-pyrophosphate, but can bind the inhibitor dapsone. Seems to lack dihydropteroate synthase activity, and does probably not function in folate metabolism. This chain is Inactive dihydropteroate synthase 2 (folP2), found in Mycobacterium leprae (strain TN).